The sequence spans 319 residues: Pantothenate kinase (319 aa).

An ATP-binding site is contributed by 101–108 (GSVAVGKS).

It belongs to the prokaryotic pantothenate kinase family.

It localises to the cytoplasm. It carries out the reaction (R)-pantothenate + ATP = (R)-4'-phosphopantothenate + ADP + H(+). It functions in the pathway cofactor biosynthesis; coenzyme A biosynthesis; CoA from (R)-pantothenate: step 1/5. In Clavibacter michiganensis subsp. michiganensis (strain NCPPB 382), this protein is Pantothenate kinase.